Consider the following 344-residue polypeptide: Enoyl-[acyl-carrier-protein] reductase, mitochondrial (344 aa).

The transit peptide at 1–14 (MLKVLSLRSALQRA) directs the protein to the mitochondrion. Residue Tyr-69 is the Proton donor of the active site. Residues Asn-142, 168-171 (NSAV), 191-193 (RSR), 255-258 (YGGM), 280-282 (FWM), and Lys-338 contribute to the NADP(+) site.

This sequence belongs to the zinc-containing alcohol dehydrogenase family. Quinone oxidoreductase subfamily. Homodimer.

The protein resides in the mitochondrion. It carries out the reaction a 2,3-saturated acyl-[ACP] + NADP(+) = a (2E)-enoyl-[ACP] + NADPH + H(+). Functionally, catalyzes the NADPH-dependent reduction of trans-2-enoyl thioesters in mitochondrial fatty acid synthesis (fatty acid synthesis type II). Fatty acid chain elongation in mitochondria uses acyl carrier protein (ACP) as an acyl group carrier, but the enzyme accepts both ACP and CoA thioesters as substrates in vitro. May provide the octanoyl chain used for lipoic acid biosynthesis, regulating protein lipoylation and mitochondrial respiratory activity. Involved in iron homeostasis; affecting Fe-S cluster assembly and ceramide metabolism. Required for proper morphology and bioenergetic functions of mitochondria. Required for maintenance of neurons. The polypeptide is Enoyl-[acyl-carrier-protein] reductase, mitochondrial (Caenorhabditis elegans).